The chain runs to 311 residues: Putative dihydroorotate dehydrogenase A (fumarate) (311 aa).

Substrate-binding positions include K45, 69–73 (NSMGL), and N128. 45–46 (KT) serves as a coordination point for FMN. N128 lines the FMN pocket. Residue C131 is the Nucleophile of the active site. FMN contacts are provided by K165 and V193. A substrate-binding site is contributed by 194-195 (NS). FMN is bound by residues G220, 248-249 (GG), and 270-271 (GT).

It belongs to the dihydroorotate dehydrogenase family. Type 1 subfamily. In terms of assembly, homodimer. The cofactor is FMN.

Its subcellular location is the cytoplasm. It catalyses the reaction (S)-dihydroorotate + fumarate = orotate + succinate. Its pathway is pyrimidine metabolism; UMP biosynthesis via de novo pathway. In terms of biological role, catalyzes the conversion of dihydroorotate to orotate with fumarate as the electron acceptor. This is Putative dihydroorotate dehydrogenase A (fumarate) (pyrD) from Streptococcus uberis (strain ATCC BAA-854 / 0140J).